The sequence spans 306 residues: Bifunctional protein FolD 1 (306 aa).

NADP(+) contacts are provided by residues glycine 168–serine 170, serine 193, and isoleucine 234.

This sequence belongs to the tetrahydrofolate dehydrogenase/cyclohydrolase family. In terms of assembly, homodimer.

The enzyme catalyses (6R)-5,10-methylene-5,6,7,8-tetrahydrofolate + NADP(+) = (6R)-5,10-methenyltetrahydrofolate + NADPH. The catalysed reaction is (6R)-5,10-methenyltetrahydrofolate + H2O = (6R)-10-formyltetrahydrofolate + H(+). It participates in one-carbon metabolism; tetrahydrofolate interconversion. Functionally, catalyzes the oxidation of 5,10-methylenetetrahydrofolate to 5,10-methenyltetrahydrofolate and then the hydrolysis of 5,10-methenyltetrahydrofolate to 10-formyltetrahydrofolate. This chain is Bifunctional protein FolD 1, found in Rhizobium meliloti (strain 1021) (Ensifer meliloti).